Consider the following 477-residue polypeptide: MQNFEVIIGIEVHTALNTKTKMFSNAATSHKSIPNTLINEIDLALPGTLPTVNQEVVHKGLFLANALHMRTNHQFIAFDRKHYYYLDLPKGYQITQNYFPIGQNGYIQIIDEYNNLKRIRIKQIHLEEDTAKQTNIGNQIYLDYNRAGWPLIEIVSEADLRSAQETVLFLEELRKILLFNDISDAKMEDGSLRVDVNVSIRPQGAKKFGTKVEIKNINSISNVAKAIDYEIRRQLNLILLNQNVEQQTRRFDDNTNTTVFMRSKNDAINYRYIREANIAPIHLSDDYVKKMFLTKSCSINDLRQQLAQKGLVSSAIEQLLSDGPLFKAFKYVDKIVNNPLSVYKWLCLEFIGLINKNTQNIEEITPELLQKIARMILLFDQTLINGKQTKIILEKIYLTNKDPQILIKELGFEQITNENEITKLWHQILAKNQEMLLQYNERPDRVEKFFMGEIMKLTKAQANPTISFNVLKKILQK.

Belongs to the GatB/GatE family. GatB subfamily. As to quaternary structure, heterotrimer of A, B and C subunits.

The catalysed reaction is L-glutamyl-tRNA(Gln) + L-glutamine + ATP + H2O = L-glutaminyl-tRNA(Gln) + L-glutamate + ADP + phosphate + H(+). It catalyses the reaction L-aspartyl-tRNA(Asn) + L-glutamine + ATP + H2O = L-asparaginyl-tRNA(Asn) + L-glutamate + ADP + phosphate + 2 H(+). Allows the formation of correctly charged Asn-tRNA(Asn) or Gln-tRNA(Gln) through the transamidation of misacylated Asp-tRNA(Asn) or Glu-tRNA(Gln) in organisms which lack either or both of asparaginyl-tRNA or glutaminyl-tRNA synthetases. The reaction takes place in the presence of glutamine and ATP through an activated phospho-Asp-tRNA(Asn) or phospho-Glu-tRNA(Gln). The polypeptide is Aspartyl/glutamyl-tRNA(Asn/Gln) amidotransferase subunit B (Ureaplasma parvum serovar 3 (strain ATCC 27815 / 27 / NCTC 11736)).